Here is a 330-residue protein sequence, read N- to C-terminus: L-lactate dehydrogenase (330 aa).

Residues valine 31, aspartate 52, lysine 57, and 96–97 contribute to the NAD(+) site; that span reads GA. Residues glutamine 99, arginine 105, and 137–140 each bind substrate; that span reads NPVD. NAD(+) contacts are provided by residues 135–137 and serine 160; that span reads VSN. Position 165–168 (165–168) interacts with substrate; the sequence is DTAR. Positions 170 and 185 each coordinate beta-D-fructose 1,6-bisphosphate. Histidine 192 functions as the Proton acceptor in the catalytic mechanism. Residue tyrosine 238 is modified to Phosphotyrosine. Threonine 247 is a binding site for substrate.

It belongs to the LDH/MDH superfamily. LDH family. Homotetramer.

The protein localises to the cytoplasm. The enzyme catalyses (S)-lactate + NAD(+) = pyruvate + NADH + H(+). Its pathway is fermentation; pyruvate fermentation to lactate; (S)-lactate from pyruvate: step 1/1. Allosterically activated by fructose 1,6-bisphosphate (FBP). Its function is as follows. Catalyzes the conversion of lactate to pyruvate. This is L-lactate dehydrogenase from Gloeobacter violaceus (strain ATCC 29082 / PCC 7421).